Here is a 291-residue protein sequence, read N- to C-terminus: Taste receptor type 2 member 16 (291 aa).

A topological domain (extracellular) is located at residue Met1. Residues 2–22 (IPIQLTVFFMIIYVLESLTII) traverse the membrane as a helical segment. Residues 23–41 (VQSSLIVAVLGREWLQVRR) lie on the Cytoplasmic side of the membrane. The chain crosses the membrane as a helical span at residues 42-62 (LMPVDMILISLGISRFCLQWA). Residues 63–84 (SMLNNFCSYFNLNYVLCNLTIT) are Extracellular-facing. Residue Asn80 is glycosylated (N-linked (GlcNAc...) asparagine). A helical transmembrane segment spans residues 85–105 (WEFFNILTFWLNSLLTVFYCI). Residues 106–125 (KASSFTHHIFLWLRWRILRL) are Cytoplasmic-facing. The helical transmembrane segment at 126–146 (FPWILLGSLMITCVTIIPSAI) threads the bilayer. The Extracellular portion of the chain corresponds to 147–182 (GNYIQIQLLTMEHLPRNSTVTDKLEKFHQYQFQAHT). N-linked (GlcNAc...) asparagine glycosylation is present at Asn163. Residues 183–203 (VALVIPFILFLASTILLMASL) traverse the membrane as a helical segment. Over 204 to 228 (TKQIQHHSTGHCNPSMKAHFTALRS) the chain is Cytoplasmic. Residues 229-249 (LAVLFIVFTSYFLTILITIIG) form a helical membrane-spanning segment. The Extracellular portion of the chain corresponds to 250 to 257 (TLFDKRCW). A helical transmembrane segment spans residues 258–278 (LWVWEAFVYAFILMHSTSLML). Residues 279-291 (SSPTLKRILKGKC) are Cytoplasmic-facing.

This sequence belongs to the G-protein coupled receptor T2R family. As to quaternary structure, interacts with RTP3 and RTP4.

Its subcellular location is the cell membrane. Functionally, receptor that may play a role in the perception of bitterness and is gustducin-linked. May play a role in sensing the chemical composition of the gastrointestinal content. The activity of this receptor may stimulate alpha gustducin, mediate PLC-beta-2 activation and lead to the gating of TRPM5. The sequence is that of Taste receptor type 2 member 16 (TAS2R16) from Pan paniscus (Pygmy chimpanzee).